The primary structure comprises 311 residues: Pyrimidine-specific ribonucleoside hydrolase RihA (311 aa).

His240 is an active-site residue.

It belongs to the IUNH family. RihA subfamily.

Functionally, hydrolyzes cytidine or uridine to ribose and cytosine or uracil, respectively. The chain is Pyrimidine-specific ribonucleoside hydrolase RihA from Salmonella typhimurium (strain LT2 / SGSC1412 / ATCC 700720).